The chain runs to 264 residues: Splicing factor U2af 38 kDa subunit (264 aa).

The segment at 12–40 adopts a C3H1-type 1 zinc-finger fold; the sequence is EKDKVNCSFYFKIGACRHGDRCSRIHNKP. Ser19 bears the Phosphoserine mark. Residues 44-149 enclose the RRM domain; the sequence is QTVLLQNLYV…RPVYSELSPV (106 aa). A C3H1-type 2 zinc finger spans residues 151–178; the sequence is DFREACCRQYEMGECTRSGFCNFMHLKP. Over residues 190–219 the composition is skewed to basic residues; sequence RRRRARSRSRSPGRRRGSRSRSRSPGRRGG. A disordered region spans residues 190-264; that stretch reads RRRRARSRSR…GGGGGGGGRY (75 aa). Residues 233–251 show a composition bias toward basic and acidic residues; sequence NERDNMRGNDRGNDRDRRK. Over residues 253-264 the composition is skewed to gly residues; that stretch reads GGGGGGGGGGRY.

It belongs to the splicing factor SR family. Associates with a 65 kDa protein.

Its subcellular location is the nucleus. Necessary for the splicing of pre-mRNA. Binds to the polypyrimidine tract of introns early during spliceosome assembly. The protein is Splicing factor U2af 38 kDa subunit (U2af38) of Drosophila melanogaster (Fruit fly).